The sequence spans 311 residues: Malate dehydrogenase (311 aa).

Residues 7 to 13 (GAAGGIG) and aspartate 34 each bind NAD(+). Residues arginine 81 and arginine 87 each coordinate substrate. Residues asparagine 94 and 117 to 119 (ITN) each bind NAD(+). 2 residues coordinate substrate: asparagine 119 and arginine 153. Residue histidine 177 is the Proton acceptor of the active site. Methionine 227 serves as a coordination point for NAD(+).

This sequence belongs to the LDH/MDH superfamily. MDH type 1 family. Homodimer.

It catalyses the reaction (S)-malate + NAD(+) = oxaloacetate + NADH + H(+). Its function is as follows. Catalyzes the reversible oxidation of malate to oxaloacetate. In Shewanella woodyi (strain ATCC 51908 / MS32), this protein is Malate dehydrogenase.